A 31-amino-acid chain; its full sequence is Spectrin beta chain, non-erythrocytic 1 (31 aa).

Spectrin repeat units follow at residues 1-10 (VLLLSQDYGK), 11-19 (YKEVAELTR), and 20-31 (TQILAASYELHK). Y27 carries the phosphotyrosine modification.

It belongs to the spectrin family. Interacts with ANK2. Interacts with CPNE4 (via VWFA domain). Like erythrocyte spectrin, the spectrin-like proteins are capable to form dimers which can further associate to tetramers. Associates with the gamma-tubulin complex in brain, but not in kidney, liver, sperm, or uterus. Interacts with CAMSAP1. Can form heterodimers with SPTAN1.

The protein localises to the cytoplasm. Its subcellular location is the cytoskeleton. It localises to the myofibril. It is found in the sarcomere. The protein resides in the m line. The protein localises to the cytosol. Its subcellular location is the cell membrane. Its function is as follows. Fodrin, which seems to be involved in secretion, interacts with calmodulin in a calcium-dependent manner and is thus candidate for the calcium-dependent movement of the cytoskeleton at the membrane. Plays a critical role in central nervous system development and function. In Capra hircus (Goat), this protein is Spectrin beta chain, non-erythrocytic 1 (SPTBN1).